Consider the following 180-residue polypeptide: Peptidyl-tRNA hydrolase (180 aa).

Tyr-13 lines the tRNA pocket. His-18 (proton acceptor) is an active-site residue. Tyr-58, Asn-60, and Asn-100 together coordinate tRNA.

It belongs to the PTH family. As to quaternary structure, monomer.

The protein resides in the cytoplasm. It carries out the reaction an N-acyl-L-alpha-aminoacyl-tRNA + H2O = an N-acyl-L-amino acid + a tRNA + H(+). Functionally, hydrolyzes ribosome-free peptidyl-tRNAs (with 1 or more amino acids incorporated), which drop off the ribosome during protein synthesis, or as a result of ribosome stalling. In terms of biological role, catalyzes the release of premature peptidyl moieties from peptidyl-tRNA molecules trapped in stalled 50S ribosomal subunits, and thus maintains levels of free tRNAs and 50S ribosomes. In Fervidobacterium nodosum (strain ATCC 35602 / DSM 5306 / Rt17-B1), this protein is Peptidyl-tRNA hydrolase.